Consider the following 132-residue polypeptide: Translation initiation factor 5A (132 aa).

K37 bears the Hypusine mark.

It belongs to the eIF-5A family.

It localises to the cytoplasm. In terms of biological role, functions by promoting the formation of the first peptide bond. This Methanocaldococcus jannaschii (strain ATCC 43067 / DSM 2661 / JAL-1 / JCM 10045 / NBRC 100440) (Methanococcus jannaschii) protein is Translation initiation factor 5A (eif5a).